The sequence spans 138 residues: Basic phospholipase A2 Tbo-G6D49 (138 aa).

The N-terminal stretch at 1–16 (MRTLWIMAVLLVGVEG) is a signal peptide. Intrachain disulfides connect cysteine 42-cysteine 131, cysteine 44-cysteine 60, cysteine 59-cysteine 111, cysteine 65-cysteine 138, cysteine 66-cysteine 104, cysteine 73-cysteine 97, and cysteine 91-cysteine 102. Residues tyrosine 43, glycine 45, and glycine 47 each contribute to the Ca(2+) site. Histidine 63 is a catalytic residue. A Ca(2+)-binding site is contributed by aspartate 64. Aspartate 105 is an active-site residue.

In terms of assembly, monomer. Ca(2+) is required as a cofactor. As to expression, expressed by the venom gland.

Its subcellular location is the secreted. It catalyses the reaction a 1,2-diacyl-sn-glycero-3-phosphocholine + H2O = a 1-acyl-sn-glycero-3-phosphocholine + a fatty acid + H(+). Snake venom phospholipase A2 (PLA2) that impairs hemostasis. It weakly inhibits ADP-induced platelet aggregation when tested on platelet rich plasma from human and rabbit blood (15-25% of inhibition at 5-10 ug of enzyme), and dose-dependently inhibits blood coagulation, possibly by inhibiting thrombin activation. Exhibits strong hydrolytic activities toward L-dipalmitoyl phosphatidylcholine. PLA2 catalyzes the calcium-dependent hydrolysis of the 2-acyl groups in 3-sn-phosphoglycerides. The chain is Basic phospholipase A2 Tbo-G6D49 from Craspedocephalus borneensis (Borneo pit viper).